A 321-amino-acid polypeptide reads, in one-letter code: Fe-S cluster assembly protein DRE2 (321 aa).

The segment at 1–131 (MERMLLLSPP…KPDFGPENIV (131 aa)) is N-terminal SAM-like domain. Residues 132 to 213 (PLKLGKRKPV…EETLLDGEDM (82 aa)) are linker. 4 residues coordinate [2Fe-2S] cluster: Cys-223, Cys-234, Cys-237, and Cys-239. The fe-S binding site A stretch occupies residues 223 to 239 (CRPKAGKRRRACKDCTC). Residues Cys-284, Cys-287, Cys-295, and Cys-298 each contribute to the [4Fe-4S] cluster site. Short sequence motifs (cx2C motif) lie at residues 284–287 (CGNC) and 295–298 (CDGC). Residues 284-298 (CGNCALGDAFRCDGC) are fe-S binding site B.

This sequence belongs to the anamorsin family. Monomer. Interacts with TAH18. Interacts with MIA40. It depends on [2Fe-2S] cluster as a cofactor. The cofactor is [4Fe-4S] cluster.

It localises to the cytoplasm. Its subcellular location is the mitochondrion intermembrane space. Functionally, component of the cytosolic iron-sulfur (Fe-S) protein assembly (CIA) machinery required for the maturation of extramitochondrial Fe-S proteins. Part of an electron transfer chain functioning in an early step of cytosolic Fe-S biogenesis, facilitating the de novo assembly of a [4Fe-4S] cluster on the scaffold complex CFD1-NBP35. Electrons are transferred to DRE2 from NADPH via the FAD- and FMN-containing protein TAH18. TAH18-DRE2 are also required for the assembly of the diferric tyrosyl radical cofactor of ribonucleotide reductase (RNR), probably by providing electrons for reduction during radical cofactor maturation in the catalytic small subunit RNR2. The polypeptide is Fe-S cluster assembly protein DRE2 (Coccidioides immitis (strain RS) (Valley fever fungus)).